The primary structure comprises 431 residues: Enolase (431 aa).

Gln167 lines the (2R)-2-phosphoglycerate pocket. Glu209 acts as the Proton donor in catalysis. Mg(2+) is bound by residues Asp246, Glu289, and Asp316. 4 residues coordinate (2R)-2-phosphoglycerate: Lys341, Arg370, Ser371, and Lys392. Lys341 acts as the Proton acceptor in catalysis.

Belongs to the enolase family. In terms of assembly, component of the RNA degradosome, a multiprotein complex involved in RNA processing and mRNA degradation. Mg(2+) is required as a cofactor.

It is found in the cytoplasm. The protein resides in the secreted. It localises to the cell surface. It carries out the reaction (2R)-2-phosphoglycerate = phosphoenolpyruvate + H2O. Its pathway is carbohydrate degradation; glycolysis; pyruvate from D-glyceraldehyde 3-phosphate: step 4/5. Its function is as follows. Catalyzes the reversible conversion of 2-phosphoglycerate (2-PG) into phosphoenolpyruvate (PEP). It is essential for the degradation of carbohydrates via glycolysis. The chain is Enolase from Shewanella sp. (strain MR-4).